The primary structure comprises 388 residues: MNLHEYQAKSLFAEYGLPVSEGFACDTAQEAVEAAGHIGGDMWVVKCQVHAGGRGKAGGVKVTSSKDEIRAFAENWLGKNLVTYQTDAKGQPVAKILVESCTDIANELYLGAVVDRSTRRVVFMASTEGGVDIETVAEHTPELIHTAIIDPLTGPQAYQARDLGFKLGLNPTQMKQFTKIFMGLANMFNDHDFALLEINPLVITTEGNLHCLDGKIGIDGNALFRQPKIKAMHDPSQDDAREAHAAKFELNYVALDGNVGCMVNGAGLAMGTMDIVNLHGGKPANFLDVGGGATKERVAEAFKIILSDSNVKAVLVNIFGGIVRCDMIAEGIIGAVKEVGVKVPVVVRLEGTNAELGREVLAKSGLDIIAATSLTDAAEQVVKAAEGK.

Residues 9 to 244 form the ATP-grasp domain; it reads KSLFAEYGLP…PSQDDAREAH (236 aa). ATP-binding positions include Lys-46, 53–55, Glu-99, Thr-102, and Glu-107; that span reads GRG. Mg(2+) is bound by residues Asn-199 and Asp-213. Substrate is bound by residues Asn-264 and 321–323; that span reads GIV.

It belongs to the succinate/malate CoA ligase beta subunit family. In terms of assembly, heterotetramer of two alpha and two beta subunits. The cofactor is Mg(2+).

The enzyme catalyses succinate + ATP + CoA = succinyl-CoA + ADP + phosphate. The catalysed reaction is GTP + succinate + CoA = succinyl-CoA + GDP + phosphate. It functions in the pathway carbohydrate metabolism; tricarboxylic acid cycle; succinate from succinyl-CoA (ligase route): step 1/1. Succinyl-CoA synthetase functions in the citric acid cycle (TCA), coupling the hydrolysis of succinyl-CoA to the synthesis of either ATP or GTP and thus represents the only step of substrate-level phosphorylation in the TCA. The beta subunit provides nucleotide specificity of the enzyme and binds the substrate succinate, while the binding sites for coenzyme A and phosphate are found in the alpha subunit. This chain is Succinate--CoA ligase [ADP-forming] subunit beta, found in Shewanella denitrificans (strain OS217 / ATCC BAA-1090 / DSM 15013).